The primary structure comprises 342 residues: MPKRKVTFQGVGDEDGEDEISVPKKKLVDPVAAAGGPGSRFKGKHSLDSDEEDDDEEGSSKYDILASEDVEGQEAATLPSEGGVRITPFNLQEEMEEGHFDADGNYFLNQDAQIRDSWLDNIDWVRIKERPPDKHQVSDSEEEDSLGQTPMSAQALLEGLLELLLPRETVAGALRRLGARGGGKGSNSKGTGRPNSPQRLDRLSGLADQMVARGNLGVYQETRERLAMRLKGLGCRAQGSHDPTPPPSLDMFAEEVAEGELETPTPTQREEAESAGDGLMDVMWEYKWENTGDAELYGPFTSAQMQTWVSEGYFPDGVYCRKLDPPGGQFYNSKRIDFELYT.

The tract at residues 1-64 (MPKRKVTFQG…DEEGSSKYDI (64 aa)) is disordered. K26 participates in a covalent cross-link: Glycyl lysine isopeptide (Lys-Gly) (interchain with G-Cter in SUMO2). N6-acetyllysine is present on K44. Residues S46, S49, and S117 each carry the phosphoserine modification. 2 disordered regions span residues 130-150 (RPPD…GQTP) and 177-200 (LGAR…PQRL). S196 is subject to Phosphoserine. One can recognise a GYF domain in the interval 281 to 339 (DVMWEYKWENTGDAELYGPFTSAQMQTWVSEGYFPDGVYCRKLDPPGGQFYNSKRIDFE).

As to quaternary structure, component of the U5 snRNP complex composed of the U5 snRNA and at least PRPF6, PRPF8, SNRNP200, EFTUD2, SNRNP40, DDX23, TXNL4A and CD2BP2. Interacts directly with TXNL4A and PRPF6. Interacts (via GYF domain) with CD2 (via Pro-rich sequence in the cytoplasmic domain). Interacts with PQBP1.

The protein resides in the cytoplasm. It localises to the nucleus. Its function is as follows. Involved in pre-mRNA splicing as component of the U5 snRNP complex that is involved in spliceosome assembly. The protein is CD2 antigen cytoplasmic tail-binding protein 2 (Cd2bp2) of Mus musculus (Mouse).